We begin with the raw amino-acid sequence, 296 residues long: Myeloid differentiation primary response protein MyD88 (296 aa).

A Death domain is found at 54 to 109; the sequence is MDFEYLEIRQLETQADPTGRLLDAWQGRPGASVGRLLELLTKLGRDDVLLELGPSI. The tract at residues 110 to 155 is intermediate domain; the sequence is EEDCQKYILKQQQEEAEKPLQVAAVDSSVPRTAELAGITTLDDPLG. The region spanning 159 to 293 is the TIR domain; the sequence is ERFDAFICYC…WFWTRLAKAL (135 aa). Serine 244 is modified (phosphoserine).

As to quaternary structure, homodimer. Also forms heterodimers with TIRAP. Binds to TLR2, TLR5, IRAK1, IRAK2 and IRAK4 via their respective TIR domains. Interacts with IL18R1. Interacts with BMX, IL1RL1, IKBKE and IRF7. Interacts with LRRFIP1 and LRRFIP2; this interaction positively regulates Toll-like receptor (TLR) signaling in response to agonist. Interacts with FLII. LRRFIP1 and LRRFIP2 compete with FLII for MYD88-binding. Interacts with IRF1. Upon IL1B treatment, forms a complex with PELI1, IRAK1, IRAK4 and TRAF6; this complex recruits MAP3K7/TAK1, TAB1 and TAB2 to mediate NF-kappa-B activation. Direct binding of SMAD6 to PELI1 prevents the complex formation and hence negatively regulates IL1R-TLR signaling and eventually NF-kappa-B-mediated gene expression. May interact with PIK3AP1. Interacts (via TIR domain) with DHX9 (via H2A and OB-fold regions); this interaction is direct. Interacts with OTUD4 deubiquitinase; the interaction is direct. Interacts with TLR4. In terms of assembly, (Microbial infection) In case of infection, interacts with uropathogenic E.coli protein TcpC; suppressing Toll-like receptor (TLR)-mediated cytokine production. (Microbial infection) In case of infection, interacts with uropathogenic E.faecalis protein TcpF; suppressing Toll-like receptor (TLR)-mediated cytokine production. As to quaternary structure, (Microbial infection) In case of infection, interacts with B.melitensis protein TcpB. In terms of assembly, (Microbial infection) Interacts with human metapneumovirus protein M2-2; this interaction prevents MYD88-mediated cytokine secretion. Ubiquitinated; undergoes 'Lys-63'-linked polyubiquitination. OTUD4 specifically hydrolyzes 'Lys-63'-linked polyubiquitinated MYD88. Deubiquitinated by USP3 that cleaves 'Lys-63'-linked ubiquitin chains leading to inhibition of MYD88-induced NF-kappa-B signaling. Post-translationally, (Microbial infection) Ubiquitinated by human herpesvirus 8 (KSHV) protein RTA/ORF50, leading to proteasomal degradation ans suppression of TLR4 signaling pathway. In terms of tissue distribution, ubiquitous.

It is found in the cytoplasm. It localises to the nucleus. Functionally, adapter protein involved in the Toll-like receptor and IL-1 receptor signaling pathway in the innate immune response. Acts via IRAK1, IRAK2, IRF7 and TRAF6, leading to NF-kappa-B activation, cytokine secretion and the inflammatory response. Increases IL-8 transcription. Involved in IL-18-mediated signaling pathway. Activates IRF1 resulting in its rapid migration into the nucleus to mediate an efficient induction of IFN-beta, NOS2/INOS, and IL12A genes. Upon TLR8 activation by GU-rich single-stranded RNA (GU-rich RNA) derived from viruses such as SARS-CoV-2, SARS-CoV and HIV-1, induces IL1B release through NLRP3 inflammasome activation. MyD88-mediated signaling in intestinal epithelial cells is crucial for maintenance of gut homeostasis and controls the expression of the antimicrobial lectin REG3G in the small intestine. This chain is Myeloid differentiation primary response protein MyD88, found in Homo sapiens (Human).